A 239-amino-acid chain; its full sequence is tRNA (guanine-N(7)-)-methyltransferase (239 aa).

4 residues coordinate S-adenosyl-L-methionine: E69, E94, D121, and D144. D144 is a catalytic residue. K148 lines the substrate pocket. The interaction with RNA stretch occupies residues 150–155; it reads RHNKRR. Residues D180 and 217 to 220 contribute to the substrate site; that span reads TKFE.

The protein belongs to the class I-like SAM-binding methyltransferase superfamily. TrmB family. As to quaternary structure, monomer.

It catalyses the reaction guanosine(46) in tRNA + S-adenosyl-L-methionine = N(7)-methylguanosine(46) in tRNA + S-adenosyl-L-homocysteine. Its pathway is tRNA modification; N(7)-methylguanine-tRNA biosynthesis. Catalyzes the formation of N(7)-methylguanine at position 46 (m7G46) in tRNA. This chain is tRNA (guanine-N(7)-)-methyltransferase, found in Pectobacterium atrosepticum (strain SCRI 1043 / ATCC BAA-672) (Erwinia carotovora subsp. atroseptica).